Consider the following 687-residue polypeptide: Glycine--tRNA ligase beta subunit (687 aa).

The protein belongs to the class-II aminoacyl-tRNA synthetase family. In terms of assembly, tetramer of two alpha and two beta subunits.

Its subcellular location is the cytoplasm. The enzyme catalyses tRNA(Gly) + glycine + ATP = glycyl-tRNA(Gly) + AMP + diphosphate. This chain is Glycine--tRNA ligase beta subunit, found in Lactobacillus acidophilus (strain ATCC 700396 / NCK56 / N2 / NCFM).